The following is a 567-amino-acid chain: Arginine--tRNA ligase (567 aa).

Positions 121 to 131 (ANPNGPLHVGH) match the 'HIGH' region motif.

The protein belongs to the class-I aminoacyl-tRNA synthetase family.

The protein resides in the cytoplasm. The enzyme catalyses tRNA(Arg) + L-arginine + ATP = L-arginyl-tRNA(Arg) + AMP + diphosphate. In Methanococcoides burtonii (strain DSM 6242 / NBRC 107633 / OCM 468 / ACE-M), this protein is Arginine--tRNA ligase.